The chain runs to 262 residues: Sulfur carrier protein FdhD (262 aa).

Cysteine 105 (cysteine persulfide intermediate) is an active-site residue. Mo-bis(molybdopterin guanine dinucleotide) is bound at residue 246–251; the sequence is FVRKNR.

The protein belongs to the FdhD family.

Its subcellular location is the cytoplasm. Functionally, required for formate dehydrogenase (FDH) activity. Acts as a sulfur carrier protein that transfers sulfur from IscS to the molybdenum cofactor prior to its insertion into FDH. In Picrophilus torridus (strain ATCC 700027 / DSM 9790 / JCM 10055 / NBRC 100828 / KAW 2/3), this protein is Sulfur carrier protein FdhD.